Consider the following 349-residue polypeptide: SUMO-activating enzyme subunit 1 (349 aa).

At methionine 1 the chain carries N-acetylmethionine. Valine 2 carries the N-acetylvaline; in SUMO-activating enzyme subunit 1, N-terminally processed modification. Serine 15 carries the phosphoserine modification. N6-acetyllysine is present on lysine 201.

The protein belongs to the ubiquitin-activating E1 family. Heterodimer of SAE1 and UBA2/SAE2. The heterodimer corresponds to the two domains that are encoded on a single polypeptide chain in ubiquitin-activating enzyme E1. Interacts with UBE2I.

It is found in the nucleus. Its pathway is protein modification; protein sumoylation. In terms of biological role, the heterodimer acts as an E1 ligase for SUMO1, SUMO2, SUMO3, and probably SUMO4. It mediates ATP-dependent activation of SUMO proteins followed by formation of a thioester bond between a SUMO protein and a conserved active site cysteine residue on UBA2/SAE2. The polypeptide is SUMO-activating enzyme subunit 1 (Sae1) (Rattus norvegicus (Rat)).